A 263-amino-acid polypeptide reads, in one-letter code: Energy-coupling factor transporter transmembrane protein EcfT (263 aa).

4 consecutive transmembrane segments (helical) span residues 22–42 (IIFA…ATNI), 69–89 (ILFL…EGAV), 105–125 (LAII…LVTL), and 243–263 (TGLI…RGGF).

The protein belongs to the energy-coupling factor EcfT family. In terms of assembly, forms a stable energy-coupling factor (ECF) transporter complex composed of 2 membrane-embedded substrate-binding proteins (S component), 2 ATP-binding proteins (A component) and 2 transmembrane proteins (T component). May be able to interact with more than 1 S component at a time.

The protein localises to the cell membrane. In terms of biological role, transmembrane (T) component of an energy-coupling factor (ECF) ABC-transporter complex. Unlike classic ABC transporters this ECF transporter provides the energy necessary to transport a number of different substrates. The protein is Energy-coupling factor transporter transmembrane protein EcfT of Exiguobacterium sibiricum (strain DSM 17290 / CCUG 55495 / CIP 109462 / JCM 13490 / 255-15).